We begin with the raw amino-acid sequence, 121 residues long: Large ribosomal subunit protein uL24 (121 aa).

The protein belongs to the universal ribosomal protein uL24 family. In terms of assembly, part of the 50S ribosomal subunit.

Its function is as follows. One of two assembly initiator proteins, it binds directly to the 5'-end of the 23S rRNA, where it nucleates assembly of the 50S subunit. Located at the polypeptide exit tunnel on the outside of the subunit. This Thermococcus kodakarensis (strain ATCC BAA-918 / JCM 12380 / KOD1) (Pyrococcus kodakaraensis (strain KOD1)) protein is Large ribosomal subunit protein uL24.